We begin with the raw amino-acid sequence, 689 residues long: Glycine--tRNA ligase beta subunit (689 aa).

Belongs to the class-II aminoacyl-tRNA synthetase family. As to quaternary structure, tetramer of two alpha and two beta subunits.

It is found in the cytoplasm. It catalyses the reaction tRNA(Gly) + glycine + ATP = glycyl-tRNA(Gly) + AMP + diphosphate. The sequence is that of Glycine--tRNA ligase beta subunit (glyS) from Pasteurella multocida (strain Pm70).